The chain runs to 138 residues: Large ribosomal subunit protein uL16 (138 aa).

The protein belongs to the universal ribosomal protein uL16 family. As to quaternary structure, part of the 50S ribosomal subunit.

Binds 23S rRNA and is also seen to make contacts with the A and possibly P site tRNAs. This is Large ribosomal subunit protein uL16 from Mycoplasma genitalium (strain ATCC 33530 / DSM 19775 / NCTC 10195 / G37) (Mycoplasmoides genitalium).